We begin with the raw amino-acid sequence, 267 residues long: tRNA-cytidine(32) 2-sulfurtransferase 1 (267 aa).

The PP-loop motif signature appears at 42–47 (SGGKDS). Cys117, Cys120, and Cys208 together coordinate [4Fe-4S] cluster.

Belongs to the TtcA family. As to quaternary structure, homodimer. It depends on Mg(2+) as a cofactor. [4Fe-4S] cluster serves as cofactor.

Its subcellular location is the cytoplasm. The catalysed reaction is cytidine(32) in tRNA + S-sulfanyl-L-cysteinyl-[cysteine desulfurase] + AH2 + ATP = 2-thiocytidine(32) in tRNA + L-cysteinyl-[cysteine desulfurase] + A + AMP + diphosphate + H(+). The protein operates within tRNA modification. Functionally, catalyzes the ATP-dependent 2-thiolation of cytidine in position 32 of tRNA, to form 2-thiocytidine (s(2)C32). The sulfur atoms are provided by the cysteine/cysteine desulfurase (IscS) system. This Francisella tularensis subsp. tularensis (strain FSC 198) protein is tRNA-cytidine(32) 2-sulfurtransferase 1.